The chain runs to 986 residues: Bifunctional glutamine synthetase adenylyltransferase/adenylyl-removing enzyme (986 aa).

The tract at residues 1-471 (MAEAIERSLS…RYAQLFEQEA (471 aa)) is adenylyl removase. The adenylyl transferase stretch occupies residues 475–986 (TETGNLVFTG…RIFQGVVAAA (512 aa)).

Belongs to the GlnE family. It depends on Mg(2+) as a cofactor.

It carries out the reaction [glutamine synthetase]-O(4)-(5'-adenylyl)-L-tyrosine + phosphate = [glutamine synthetase]-L-tyrosine + ADP. The catalysed reaction is [glutamine synthetase]-L-tyrosine + ATP = [glutamine synthetase]-O(4)-(5'-adenylyl)-L-tyrosine + diphosphate. Involved in the regulation of glutamine synthetase GlnA, a key enzyme in the process to assimilate ammonia. When cellular nitrogen levels are high, the C-terminal adenylyl transferase (AT) inactivates GlnA by covalent transfer of an adenylyl group from ATP to specific tyrosine residue of GlnA, thus reducing its activity. Conversely, when nitrogen levels are low, the N-terminal adenylyl removase (AR) activates GlnA by removing the adenylyl group by phosphorolysis, increasing its activity. The regulatory region of GlnE binds the signal transduction protein PII (GlnB) which indicates the nitrogen status of the cell. This is Bifunctional glutamine synthetase adenylyltransferase/adenylyl-removing enzyme from Rhizobium meliloti (strain 1021) (Ensifer meliloti).